Consider the following 1001-residue polypeptide: 2-oxoglutarate dehydrogenase E1 component (1001 aa).

This sequence belongs to the alpha-ketoglutarate dehydrogenase family. Homodimer. Part of the 2-oxoglutarate dehydrogenase (OGDH) complex composed of E1 (2-oxoglutarate dehydrogenase), E2 (dihydrolipoamide succinyltransferase) and E3 (dihydrolipoamide dehydrogenase); the complex contains multiple copies of the three enzymatic components (E1, E2 and E3). Requires thiamine diphosphate as cofactor.

The catalysed reaction is N(6)-[(R)-lipoyl]-L-lysyl-[protein] + 2-oxoglutarate + H(+) = N(6)-[(R)-S(8)-succinyldihydrolipoyl]-L-lysyl-[protein] + CO2. E1 component of the 2-oxoglutarate dehydrogenase (OGDH) complex which catalyzes the decarboxylation of 2-oxoglutarate, the first step in the conversion of 2-oxoglutarate to succinyl-CoA and CO(2). This Brucella anthropi (strain ATCC 49188 / DSM 6882 / CCUG 24695 / JCM 21032 / LMG 3331 / NBRC 15819 / NCTC 12168 / Alc 37) (Ochrobactrum anthropi) protein is 2-oxoglutarate dehydrogenase E1 component.